Reading from the N-terminus, the 190-residue chain is Peptidyl-tRNA hydrolase (190 aa).

Y17 serves as a coordination point for tRNA. Catalysis depends on H22, which acts as the Proton acceptor. TRNA contacts are provided by Y67 and N69.

It belongs to the PTH family. Monomer.

It is found in the cytoplasm. It carries out the reaction an N-acyl-L-alpha-aminoacyl-tRNA + H2O = an N-acyl-L-amino acid + a tRNA + H(+). Its function is as follows. Hydrolyzes ribosome-free peptidyl-tRNAs (with 1 or more amino acids incorporated), which drop off the ribosome during protein synthesis, or as a result of ribosome stalling. Functionally, catalyzes the release of premature peptidyl moieties from peptidyl-tRNA molecules trapped in stalled 50S ribosomal subunits, and thus maintains levels of free tRNAs and 50S ribosomes. The chain is Peptidyl-tRNA hydrolase from Moorella thermoacetica (strain ATCC 39073 / JCM 9320).